We begin with the raw amino-acid sequence, 85 residues long: Small ribosomal subunit protein bS16 (85 aa).

This sequence belongs to the bacterial ribosomal protein bS16 family.

This chain is Small ribosomal subunit protein bS16, found in Pseudomonas syringae pv. tomato (strain ATCC BAA-871 / DC3000).